The sequence spans 418 residues: Magnesium transporter MRS2-E (418 aa).

A disordered region spans residues 119–146 (DAAPSTNPAAADRGNGTEQGDQGSVPGL). Residues 166–232 (VCLEHACKDL…RDELEHLLDD (67 aa)) adopt a coiled-coil conformation. The segment covering 258-268 (DSHKYASVDHD) has biased composition (basic and acidic residues). Residues 258 to 287 (DSHKYASVDHDDDREEEDHDDETESGRESS) are disordered. Residues 269 to 280 (DDREEEDHDDET) show a composition bias toward acidic residues. Residues 344-364 (GVMLTTATVVVTAGIVVVSLF) form a helical membrane-spanning segment. The Required for magnesium transport activity motif lies at 365–367 (GMN). Residues 389–409 (FWETTFGTVAGCIAIYLLAIY) form a helical membrane-spanning segment.

Belongs to the CorA metal ion transporter (MIT) (TC 1.A.35.5) family.

The protein resides in the membrane. Magnesium transporter that may mediate the influx of magnesium. The protein is Magnesium transporter MRS2-E (MRS2-E) of Oryza sativa subsp. indica (Rice).